The chain runs to 191 residues: Ribonuclease HII (191 aa).

The RNase H type-2 domain maps to 16 to 191; it reads INLIGIDEAG…KLHRKSFKLL (176 aa). Residues Asp-22, Glu-23, and Asp-110 each contribute to the a divalent metal cation site.

Belongs to the RNase HII family. Mn(2+) is required as a cofactor. Mg(2+) serves as cofactor.

The protein resides in the cytoplasm. It carries out the reaction Endonucleolytic cleavage to 5'-phosphomonoester.. Its function is as follows. Endonuclease that specifically degrades the RNA of RNA-DNA hybrids. The polypeptide is Ribonuclease HII (Campylobacter jejuni subsp. jejuni serotype O:6 (strain 81116 / NCTC 11828)).